The following is a 397-amino-acid chain: Tryptophan synthase beta chain (397 aa).

K87 bears the N6-(pyridoxal phosphate)lysine mark.

Belongs to the TrpB family. Tetramer of two alpha and two beta chains. The cofactor is pyridoxal 5'-phosphate.

The catalysed reaction is (1S,2R)-1-C-(indol-3-yl)glycerol 3-phosphate + L-serine = D-glyceraldehyde 3-phosphate + L-tryptophan + H2O. The protein operates within amino-acid biosynthesis; L-tryptophan biosynthesis; L-tryptophan from chorismate: step 5/5. The beta subunit is responsible for the synthesis of L-tryptophan from indole and L-serine. This is Tryptophan synthase beta chain from Klebsiella pneumoniae (strain 342).